A 334-amino-acid polypeptide reads, in one-letter code: Holliday junction branch migration complex subunit RuvB (334 aa).

Residues 4–184 form a large ATPase domain (RuvB-L) region; sequence ADRLIQPQLQ…FGIPLRLEFY (181 aa). ATP-binding positions include Arg24, Gly65, Lys68, Thr69, Thr70, 131–133, Arg174, Tyr184, and Arg221; that span reads EDY. Mg(2+) is bound at residue Thr69. Positions 185–255 are small ATPAse domain (RuvB-S); the sequence is NIKDLSTIVT…VADHALDLLD (71 aa). A head domain (RuvB-H) region spans residues 258–334; that stretch reads NEGFDYMDRK…YQHFQLIKPE (77 aa). DNA-binding residues include Arg294, Arg313, and Arg318.

It belongs to the RuvB family. In terms of assembly, homohexamer. Forms an RuvA(8)-RuvB(12)-Holliday junction (HJ) complex. HJ DNA is sandwiched between 2 RuvA tetramers; dsDNA enters through RuvA and exits via RuvB. An RuvB hexamer assembles on each DNA strand where it exits the tetramer. Each RuvB hexamer is contacted by two RuvA subunits (via domain III) on 2 adjacent RuvB subunits; this complex drives branch migration. In the full resolvosome a probable DNA-RuvA(4)-RuvB(12)-RuvC(2) complex forms which resolves the HJ.

It is found in the cytoplasm. The enzyme catalyses ATP + H2O = ADP + phosphate + H(+). The RuvA-RuvB-RuvC complex processes Holliday junction (HJ) DNA during genetic recombination and DNA repair, while the RuvA-RuvB complex plays an important role in the rescue of blocked DNA replication forks via replication fork reversal (RFR). RuvA specifically binds to HJ cruciform DNA, conferring on it an open structure. The RuvB hexamer acts as an ATP-dependent pump, pulling dsDNA into and through the RuvAB complex. RuvB forms 2 homohexamers on either side of HJ DNA bound by 1 or 2 RuvA tetramers; 4 subunits per hexamer contact DNA at a time. Coordinated motions by a converter formed by DNA-disengaged RuvB subunits stimulates ATP hydrolysis and nucleotide exchange. Immobilization of the converter enables RuvB to convert the ATP-contained energy into a lever motion, pulling 2 nucleotides of DNA out of the RuvA tetramer per ATP hydrolyzed, thus driving DNA branch migration. The RuvB motors rotate together with the DNA substrate, which together with the progressing nucleotide cycle form the mechanistic basis for DNA recombination by continuous HJ branch migration. Branch migration allows RuvC to scan DNA until it finds its consensus sequence, where it cleaves and resolves cruciform DNA. In Shewanella sp. (strain W3-18-1), this protein is Holliday junction branch migration complex subunit RuvB.